The sequence spans 556 residues: Vacuolar protein 8 (556 aa).

The N-myristoyl glycine moiety is linked to residue Gly2. 3 S-palmitoyl cysteine lipidation sites follow: Cys4, Cys5, and Cys7. ARM repeat units follow at residues 38-74 (NRSE…AFAE), 75-115 (VTEK…NLAV), 117-156 (DSNK…NLAT), 158-197 (DQNK…NMTH), 199-238 (LENR…NIAV), 242-281 (NRKK…NLAS), 283-322 (ANYQ…NISI), 324-364 (PLNE…NLAA), and 408-447 (DDLK…NLCS).

The protein belongs to the beta-catenin family.

Its subcellular location is the vacuole membrane. Functionally, functions in both vacuole inheritance and protein targeting from the cytoplasm to vacuole. In Komagataella pastoris (Yeast), this protein is Vacuolar protein 8 (VAC8).